The following is a 1170-amino-acid chain: Integrin alpha-2 (1170 aa).

Positions 1 to 18 are cleaved as a signal peptide; the sequence is PLQLVLVFSQGILNCCVA. Residues 19 to 1121 are Extracellular-facing; it reads YNVGLPKAKI…KPHEKVEVPT (1103 aa). FG-GAP repeat units lie at residues 23-81 and 90-150; these read LPKA…TTTC and TSMS…LRTS. A disulfide bridge connects residues Cys72 and Cys81. 3 N-linked (GlcNAc...) asparagine glycosylation sites follow: Asn94, Asn101, and Asn332. The 178-residue stretch at 177–354 folds into the VWFA domain; that stretch reads WDAVKNFLEK…TIGEQIFSIE (178 aa). 5 FG-GAP repeats span residues 355-409, 412-464, 466-528, 529-587, and 591-653; these read GTVQ…LIFS, AFEQ…ENGN, TVIQ…ILNW, HQFL…MIRL, and QKIL…FTPK. 3 N-linked (GlcNAc...) asparagine glycosylation sites follow: Asn421, Asn449, and Asn464. A Cell attachment site motif is present at residues 472–474; that stretch reads RGD. Positions 488, 490, 492, 496, 552, 554, 556, 560, 616, 618, 620, and 624 each coordinate Ca(2+). Cys669 and Cys726 are oxidised to a cystine. 2 N-linked (GlcNAc...) asparagine glycosylation sites follow: Asn688 and Asn748. 2 cysteine pairs are disulfide-bonded: Cys778-Cys784 and Cys854-Cys865. Asn945 is a glycosylation site (N-linked (GlcNAc...) asparagine). 2 disulfide bridges follow: Cys1008–Cys1039 and Cys1044–Cys1049. Asn1063 and Asn1070 each carry an N-linked (GlcNAc...) asparagine glycan. The chain crosses the membrane as a helical span at residues 1122–1143; sequence GVIVGSVIAGILLLLALVAILW. Residues 1144–1170 lie on the Cytoplasmic side of the membrane; that stretch reads KLGFFKRKYEKMAKNPDETDETTELNS. The GFFKR motif motif lies at 1146–1150; that stretch reads GFFKR.

It belongs to the integrin alpha chain family. In terms of assembly, heterodimer of an alpha and a beta subunit. Alpha-2 associates with beta-1. Interacts with HPS5 and RAB21.

Its subcellular location is the membrane. Its function is as follows. Integrin alpha-2/beta-1 is a receptor for laminin, collagen, collagen C-propeptides, fibronectin and E-cadherin. It recognizes the proline-hydroxylated sequence G-F-P-G-E-R in collagen. It is responsible for adhesion of platelets and other cells to collagens, modulation of collagen and collagenase gene expression, force generation and organization of newly synthesized extracellular matrix. The chain is Integrin alpha-2 (ITGA2) from Bos taurus (Bovine).